The following is a 475-amino-acid chain: Ribulose bisphosphate carboxylase large chain (475 aa).

Positions 1 to 2 are excised as a propeptide; that stretch reads MS. Pro-3 bears the N-acetylproline mark. Position 14 is an N6,N6,N6-trimethyllysine (Lys-14). Residues Asn-123 and Thr-173 each coordinate substrate. Catalysis depends on Lys-175, which acts as the Proton acceptor. Residue Lys-177 coordinates substrate. The Mg(2+) site is built by Lys-201, Asp-203, and Glu-204. Lys-201 carries the post-translational modification N6-carboxylysine. Residue His-294 is the Proton acceptor of the active site. 3 residues coordinate substrate: Arg-295, His-327, and Ser-379.

It belongs to the RuBisCO large chain family. Type I subfamily. In terms of assembly, heterohexadecamer of 8 large chains and 8 small chains; disulfide-linked. The disulfide link is formed within the large subunit homodimers. Mg(2+) serves as cofactor. Post-translationally, the disulfide bond which can form in the large chain dimeric partners within the hexadecamer appears to be associated with oxidative stress and protein turnover.

The protein resides in the plastid. It is found in the chloroplast. It catalyses the reaction 2 (2R)-3-phosphoglycerate + 2 H(+) = D-ribulose 1,5-bisphosphate + CO2 + H2O. It carries out the reaction D-ribulose 1,5-bisphosphate + O2 = 2-phosphoglycolate + (2R)-3-phosphoglycerate + 2 H(+). In terms of biological role, ruBisCO catalyzes two reactions: the carboxylation of D-ribulose 1,5-bisphosphate, the primary event in carbon dioxide fixation, as well as the oxidative fragmentation of the pentose substrate in the photorespiration process. Both reactions occur simultaneously and in competition at the same active site. The chain is Ribulose bisphosphate carboxylase large chain from Adiantum capillus-veneris (Maidenhair fern).